Reading from the N-terminus, the 1040-residue chain is MQVLPPSSTGGPSRLFIMRPVATTLLMVAILLAGIIGYRALPVSALPEVDYPTIQVVTLYPGASPDVMTSAVTAPLERQFGQMSGLKQMSSQSSGGASVITLQFQLTLPLDVAEQEVQAAINAATNLLPSDLPNPPVYSKVNPADPPIMTLAVTSTAMPMTQVEDMVETRVAQKISQISGVGLVTLSGGQRPAVRVKLNAQAIAALGLTSETVRTAITGANVNSAKGSLDGPSRAVTLSANDQMQSAEEYRQLIIAYQNGAPIRLGDVATVEQGAENSWLGAWANKEQAIVMNVQRQPGANIISTADSIRQMLPQLTESLPKSVEVTVLSDRTTNIRASVDDTQCELMMAIALVVMIIYLFLRNIPATIIPGVAVPLSLIGTFAVMVFLDFSINNLTLMALTIATGFVVDDAIVVIENISRYIEKGEKPLAAALKGAGEIGFTIISLTFSLIAVLIPLLFMGDIVGRLFREFAITLAVAILISAVVSLTLTPMMCARMLSQESLRKQNRFSRASEKMFDRIIAAYGRGLAKVLNHPWLTLSVALSTLLLSVLLWVFIPKGFFPVQDNGIIQGTLQAPQSSSFANMAQRQRQVADVILQDPAVQSLTSFVGVDGTNPSLNSARLQINLKPLDERDDRVQKVIARLQTAVDKVPGVDLFLQPTQDLTIDTQVSRTQYQFTLQATSLDALSTWVPQLMEKLQQLPQLSDVSSDWQDKGLVAYVNVDRDSASRLGISMADVDNALYNAFGQRLISTIYTQANQYRVVLEHNTENTPGLAALGTIRLTSSDGGVVPLSSIAKIEQRFAPLSINHLDQFPVTTISFNVPDNYSLGDAVQAIMDTEKTLNLPVDITTQFQGCTLAFQSALGSTVWLIVAAVVAMYIVLGILYESFIHPITILSTLPTAGVGALLALMIAGSELDVIAIIGIILLIGIVKKNAIMMIDFALAAEREQGMSPRDAIYQACLLRFRPILMTTLAALLGALPLMLSTGVGAELRRPLGIGMVGGLVVSQVLTLFTTPVIYLLFDRLALWTKSRFACHEEEA.

Transmembrane regions (helical) follow at residues 16 to 36 (FIMR…AGII), 347 to 367 (LMMA…NIPA), 369 to 389 (IIPG…MVFL), 396 to 416 (LTLM…IVVI), 440 to 460 (IGFT…PLLF), 472 to 492 (FAIT…TLTP), 537 to 557 (WLTL…WVFI), 863 to 883 (LGST…VLGI), 888 to 908 (FIHP…ALLA), 911 to 931 (IAGS…IGIV), 968 to 988 (ILMT…STGV), and 998 to 1018 (IGMV…TPVI).

This sequence belongs to the resistance-nodulation-cell division (RND) (TC 2.A.6) family. MdtB subfamily. Part of a tripartite efflux system composed of MdtA, MdtB and MdtC. MdtB forms a heteromultimer with MdtC.

The protein localises to the cell inner membrane. The protein is Multidrug resistance protein MdtB of Shigella boydii serotype 18 (strain CDC 3083-94 / BS512).